We begin with the raw amino-acid sequence, 390 residues long: Large ribosomal subunit protein uL3y (390 aa).

The disordered stretch occupies residues 1-36; sequence MSHRKFEHPRHGSLGFLPRKRASRHRGKVKAFPKDD. Residues 18–31 show a composition bias toward basic residues; the sequence is PRKRASRHRGKVKA.

This sequence belongs to the universal ribosomal protein uL3 family.

Its subcellular location is the cytoplasm. This is Large ribosomal subunit protein uL3y (ARP2) from Arabidopsis thaliana (Mouse-ear cress).